Here is an 855-residue protein sequence, read N- to C-terminus: DNA mismatch repair protein MutS (855 aa).

613–620 provides a ligand contact to ATP; it reads GPNMGGKS. Residues 796 to 817 form a disordered region; that stretch reads TTSLPHEQPRAKPGKPAIPQQS.

This sequence belongs to the DNA mismatch repair MutS family.

In terms of biological role, this protein is involved in the repair of mismatches in DNA. It is possible that it carries out the mismatch recognition step. This protein has a weak ATPase activity. This Pseudomonas syringae pv. tomato (strain ATCC BAA-871 / DC3000) protein is DNA mismatch repair protein MutS.